The following is a 1390-amino-acid chain: DNA-directed RNA polymerase subunit beta' (1390 aa).

Zn(2+)-binding residues include Cys70, Cys72, Cys85, and Cys88. Residues Asp460, Asp462, and Asp464 each contribute to the Mg(2+) site. Cys814, Cys888, Cys895, and Cys898 together coordinate Zn(2+).

The protein belongs to the RNA polymerase beta' chain family. As to quaternary structure, the RNAP catalytic core consists of 2 alpha, 1 beta, 1 beta' and 1 omega subunit. When a sigma factor is associated with the core the holoenzyme is formed, which can initiate transcription. It depends on Mg(2+) as a cofactor. Zn(2+) serves as cofactor.

It catalyses the reaction RNA(n) + a ribonucleoside 5'-triphosphate = RNA(n+1) + diphosphate. Functionally, DNA-dependent RNA polymerase catalyzes the transcription of DNA into RNA using the four ribonucleoside triphosphates as substrates. The protein is DNA-directed RNA polymerase subunit beta' of Pseudoalteromonas translucida (strain TAC 125).